Consider the following 130-residue polypeptide: Glycine cleavage system H protein (130 aa).

The 83-residue stretch at threonine 24 to arginine 106 folds into the Lipoyl-binding domain. Lysine 65 is modified (N6-lipoyllysine). A disordered region spans residues aspartate 111–glutamate 130.

It belongs to the GcvH family. In terms of assembly, the glycine cleavage system is composed of four proteins: P, T, L and H. (R)-lipoate is required as a cofactor.

Its function is as follows. The glycine cleavage system catalyzes the degradation of glycine. The H protein shuttles the methylamine group of glycine from the P protein to the T protein. The protein is Glycine cleavage system H protein of Alkalilimnicola ehrlichii (strain ATCC BAA-1101 / DSM 17681 / MLHE-1).